The following is a 442-amino-acid chain: UDP-N-acetylmuramate--L-alanine ligase (442 aa).

109–115 (GAHGKTS) provides a ligand contact to ATP.

The protein belongs to the MurCDEF family.

It is found in the cytoplasm. The enzyme catalyses UDP-N-acetyl-alpha-D-muramate + L-alanine + ATP = UDP-N-acetyl-alpha-D-muramoyl-L-alanine + ADP + phosphate + H(+). The protein operates within cell wall biogenesis; peptidoglycan biosynthesis. In terms of biological role, cell wall formation. This chain is UDP-N-acetylmuramate--L-alanine ligase, found in Streptococcus pyogenes serotype M6 (strain ATCC BAA-946 / MGAS10394).